Consider the following 230-residue polypeptide: Urease accessory protein UreF (230 aa).

It belongs to the UreF family. UreD, UreF and UreG form a complex that acts as a GTP-hydrolysis-dependent molecular chaperone, activating the urease apoprotein by helping to assemble the nickel containing metallocenter of UreC. The UreE protein probably delivers the nickel.

The protein resides in the cytoplasm. Its function is as follows. Required for maturation of urease via the functional incorporation of the urease nickel metallocenter. This chain is Urease accessory protein UreF, found in Cupriavidus pinatubonensis (strain JMP 134 / LMG 1197) (Cupriavidus necator (strain JMP 134)).